Consider the following 488-residue polypeptide: Envelope glycoprotein gp62 (488 aa).

Residues 1–20 (MGKFLATLILFFQFCPLILS) form the signal peptide. Residues 21 to 442 (DYSPSCCTLT…LGLSQWAREA (422 aa)) lie on the Extracellular side of the membrane. N-linked (GlcNAc...) asparagine; by host glycans are attached at residues Asn140 and Asn222. The CXXC signature appears at 225–228 (CIVC). Intrachain disulfides connect Cys225–Cys228, Cys225–Cys401, and Cys393–Cys400. N-linked (GlcNAc...) asparagine; by host glycans are attached at residues Asn244 and Asn272. Residues 313 to 333 (AVPVAVWLVSALAMGAGMAGG) are fusion peptide. Coiled coils occupy residues 341–387 (ASGR…LLFW) and 397–429 (QEQC…GWGL). The tract at residues 376 to 392 (AQNRRGLDLLFWEQGGL) is immunosuppression. The CX6CC motif lies at 393–401 (CKALQEQCC). Asn404 carries N-linked (GlcNAc...) asparagine; by host glycosylation. A helical transmembrane segment spans residues 443–463 (LQTGITLVALLLLVILAGPCI). A lipid anchor (S-palmitoyl cysteine; by host) is attached at Cys462. The Cytoplasmic segment spans residues 464 to 488 (LRQLRHLPSRVRYPHYSLINPESSL).

In terms of assembly, the mature envelope protein (Env) consists of a trimer of SU-TM heterodimers attached by a labile interchain disulfide bond. In terms of processing, specific enzymatic cleavages in vivo yield mature proteins. Envelope glycoproteins are synthesized as an inactive precursor that is N-glycosylated and processed likely by host cell furin or by a furin-like protease in the Golgi to yield the mature SU and TM proteins. The cleavage site between SU and TM requires the minimal sequence [KR]-X-[KR]-R. Post-translationally, the CXXC motif is highly conserved across a broad range of retroviral envelope proteins. It is thought to participate in the formation of a labile disulfide bond possibly with the CX6CC motif present in the transmembrane protein. Isomerization of the intersubunit disulfide bond to an SU intrachain disulfide bond is thought to occur upon receptor recognition in order to allow membrane fusion. The transmembrane protein is palmitoylated.

It is found in the virion membrane. It localises to the host cell membrane. Its function is as follows. The surface protein (SU) attaches the virus to the host cell by binding to its receptor. This interaction triggers the refolding of the transmembrane protein (TM) and is thought to activate its fusogenic potential by unmasking its fusion peptide. Fusion occurs at the host cell plasma membrane. Functionally, the transmembrane protein (TM) acts as a class I viral fusion protein. Under the current model, the protein has at least 3 conformational states: pre-fusion native state, pre-hairpin intermediate state, and post-fusion hairpin state. During viral and target cell membrane fusion, the coiled coil regions (heptad repeats) assume a trimer-of-hairpins structure, positioning the fusion peptide in close proximity to the C-terminal region of the ectodomain. The formation of this structure appears to drive apposition and subsequent fusion of viral and target cell membranes. Membranes fusion leads to delivery of the nucleocapsid into the cytoplasm. The chain is Envelope glycoprotein gp62 (env) from Human T-cell leukemia virus 1 (isolate Zaire EL subtype B) (HTLV-1).